Here is a 125-residue protein sequence, read N- to C-terminus: Large ribosomal subunit protein bL12 (125 aa).

It belongs to the bacterial ribosomal protein bL12 family. Homodimer. Part of the ribosomal stalk of the 50S ribosomal subunit. Forms a multimeric L10(L12)X complex, where L10 forms an elongated spine to which 2 to 4 L12 dimers bind in a sequential fashion. Binds GTP-bound translation factors.

Functionally, forms part of the ribosomal stalk which helps the ribosome interact with GTP-bound translation factors. Is thus essential for accurate translation. The protein is Large ribosomal subunit protein bL12 of Erythrobacter litoralis (strain HTCC2594).